A 298-amino-acid chain; its full sequence is MTTSSLAWQQATARVQQFYRLTKPRVVSLIVFTAVIGMFLSVPGAVPLDKLIFGTVGISLVAGAAAALNCLVEYKFDAIMARTKGRPLPQGKVSVPETLFFLVLIGGFGLFMLHQWVNPLTMWLTLGTFVGYAIIYTVILKPLTPQNIVIGGASGAMPPVLGWAAVTGEISADALLLFLIIFAWTPPHFWALALYRKTDYAKIGMPMLPVTHGDEFTRLHVLLYTIILCVVTVLPYLTQMSGLIYLGSVLILDAIFFYYAIRIYLHYTDQIAREAFRYSIAYLALLFTALLVDHYFYF.

The next 9 membrane-spanning stretches (helical) occupy residues Val-26–Val-46, Ile-52–Val-72, Val-93–Leu-113, Leu-120–Leu-140, Ile-148–Gly-168, Ala-174–Leu-194, Leu-219–Gln-239, Ser-241–Ile-261, and Tyr-278–Phe-298.

This sequence belongs to the UbiA prenyltransferase family. Protoheme IX farnesyltransferase subfamily.

Its subcellular location is the cell inner membrane. The enzyme catalyses heme b + (2E,6E)-farnesyl diphosphate + H2O = Fe(II)-heme o + diphosphate. Its pathway is porphyrin-containing compound metabolism; heme O biosynthesis; heme O from protoheme: step 1/1. In terms of biological role, converts heme B (protoheme IX) to heme O by substitution of the vinyl group on carbon 2 of heme B porphyrin ring with a hydroxyethyl farnesyl side group. This chain is Protoheme IX farnesyltransferase, found in Nitrosomonas europaea (strain ATCC 19718 / CIP 103999 / KCTC 2705 / NBRC 14298).